The primary structure comprises 191 residues: Protein RER1A (191 aa).

M1 bears the N-acetylmethionine mark. The next 4 membrane-spanning stretches (helical) occupy residues 39 to 57 (YRWI…RVYY), 60 to 80 (GFYI…IGFL), 115 to 135 (FKFW…TFFS), and 136 to 156 (VFDV…LFVL).

This sequence belongs to the RER1 family.

It localises to the membrane. Functionally, involved in the retrieval of endoplasmic reticulum membrane proteins from the early Golgi compartment. In Arabidopsis thaliana (Mouse-ear cress), this protein is Protein RER1A (RER1A).